We begin with the raw amino-acid sequence, 145 residues long: Large ribosomal subunit protein uL13 (145 aa).

Belongs to the universal ribosomal protein uL13 family. Part of the 50S ribosomal subunit.

In terms of biological role, this protein is one of the early assembly proteins of the 50S ribosomal subunit, although it is not seen to bind rRNA by itself. It is important during the early stages of 50S assembly. This chain is Large ribosomal subunit protein uL13, found in Geobacillus sp. (strain WCH70).